The sequence spans 479 residues: Glycogen synthase (479 aa).

Residue lysine 15 coordinates ADP-alpha-D-glucose.

It belongs to the glycosyltransferase 1 family. Bacterial/plant glycogen synthase subfamily.

It carries out the reaction [(1-&gt;4)-alpha-D-glucosyl](n) + ADP-alpha-D-glucose = [(1-&gt;4)-alpha-D-glucosyl](n+1) + ADP + H(+). It functions in the pathway glycan biosynthesis; glycogen biosynthesis. Synthesizes alpha-1,4-glucan chains using ADP-glucose. The sequence is that of Glycogen synthase from Clostridium novyi (strain NT).